Reading from the N-terminus, the 100-residue chain is Urease subunit gamma (100 aa).

It belongs to the urease gamma subunit family. In terms of assembly, heterotrimer of UreA (gamma), UreB (beta) and UreC (alpha) subunits. Three heterotrimers associate to form the active enzyme.

It localises to the cytoplasm. The catalysed reaction is urea + 2 H2O + H(+) = hydrogencarbonate + 2 NH4(+). Its pathway is nitrogen metabolism; urea degradation; CO(2) and NH(3) from urea (urease route): step 1/1. The chain is Urease subunit gamma from Rhizobium rhizogenes (strain K84 / ATCC BAA-868) (Agrobacterium radiobacter).